A 442-amino-acid chain; its full sequence is Ribulose bisphosphate carboxylase/oxygenase activase 1, chloroplastic (442 aa).

The transit peptide at 1-58 directs the protein to the chloroplast; the sequence is MATSVSTIGAVNKTPLSLNNSVAGTSVPSTAFFGKTLKKVYGKGVSSPKVTNKSLRIV. 169 to 176 lines the ATP pocket; the sequence is GGKGQGKS.

Belongs to the RuBisCO activase family.

Its subcellular location is the plastid. The protein localises to the chloroplast stroma. Functionally, activation of RuBisCO (ribulose-1,5-bisphosphate carboxylase/oxygenase; EC 4.1.1.39) involves the ATP-dependent carboxylation of the epsilon-amino group of lysine leading to a carbamate structure. The polypeptide is Ribulose bisphosphate carboxylase/oxygenase activase 1, chloroplastic (Nicotiana tabacum (Common tobacco)).